The following is a 502-amino-acid chain: ATP synthase subunit alpha (502 aa).

The segment at V115 to R139 is disordered. Position 169 to 176 (G169 to T176) interacts with ATP.

This sequence belongs to the ATPase alpha/beta chains family. F-type ATPases have 2 components, CF(1) - the catalytic core - and CF(0) - the membrane proton channel. CF(1) has five subunits: alpha(3), beta(3), gamma(1), delta(1), epsilon(1). CF(0) has three main subunits: a(1), b(2) and c(9-12). The alpha and beta chains form an alternating ring which encloses part of the gamma chain. CF(1) is attached to CF(0) by a central stalk formed by the gamma and epsilon chains, while a peripheral stalk is formed by the delta and b chains.

Its subcellular location is the cell membrane. It catalyses the reaction ATP + H2O + 4 H(+)(in) = ADP + phosphate + 5 H(+)(out). In terms of biological role, produces ATP from ADP in the presence of a proton gradient across the membrane. The alpha chain is a regulatory subunit. In Geobacillus thermodenitrificans (strain NG80-2), this protein is ATP synthase subunit alpha.